The following is a 644-amino-acid chain: Threonine--tRNA ligase (644 aa).

A TGS domain is found at 8–70; that stretch reads VKAMVITLRD…EEDGELEILT (63 aa). The segment at 251 to 541 is catalytic; the sequence is DHRKLGKELD…LTEHFAGAFP (291 aa). Zn(2+) is bound by residues C342, H393, and H518.

This sequence belongs to the class-II aminoacyl-tRNA synthetase family. Homodimer. It depends on Zn(2+) as a cofactor.

The protein resides in the cytoplasm. The enzyme catalyses tRNA(Thr) + L-threonine + ATP = L-threonyl-tRNA(Thr) + AMP + diphosphate + H(+). Functionally, catalyzes the attachment of threonine to tRNA(Thr) in a two-step reaction: L-threonine is first activated by ATP to form Thr-AMP and then transferred to the acceptor end of tRNA(Thr). Also edits incorrectly charged L-seryl-tRNA(Thr). This is Threonine--tRNA ligase from Caldanaerobacter subterraneus subsp. tengcongensis (strain DSM 15242 / JCM 11007 / NBRC 100824 / MB4) (Thermoanaerobacter tengcongensis).